The following is a 67-amino-acid chain: Small ribosomal subunit protein eS27 (67 aa).

Residues C22, C25, C41, and C44 each coordinate Zn(2+). The segment at C22–C44 adopts a C4-type zinc-finger fold.

It belongs to the eukaryotic ribosomal protein eS27 family. As to quaternary structure, part of the 30S ribosomal subunit. Zn(2+) is required as a cofactor.

This Pyrobaculum aerophilum (strain ATCC 51768 / DSM 7523 / JCM 9630 / CIP 104966 / NBRC 100827 / IM2) protein is Small ribosomal subunit protein eS27.